The chain runs to 450 residues: Tubulin alpha chain (450 aa).

Position 11 (Q11) interacts with GTP. K40 is modified (N6-acetyllysine). Residues E71, S140, G144, T145, T179, N206, and N228 each contribute to the GTP site. E71 contributes to the Mg(2+) binding site. E254 is a catalytic residue.

The protein belongs to the tubulin family. As to quaternary structure, dimer of alpha and beta chains. A typical microtubule is a hollow water-filled tube with an outer diameter of 25 nm and an inner diameter of 15 nM. Alpha-beta heterodimers associate head-to-tail to form protofilaments running lengthwise along the microtubule wall with the beta-tubulin subunit facing the microtubule plus end conferring a structural polarity. Microtubules usually have 13 protofilaments but different protofilament numbers can be found in some organisms and specialized cells. Mg(2+) is required as a cofactor. Post-translationally, acetylation of alpha chains at Lys-40 stabilizes microtubules and affects affinity and processivity of microtubule motors. This modification has a role in multiple cellular functions, ranging from cell motility, cell cycle progression or cell differentiation to intracellular trafficking and signaling.

The protein resides in the cytoplasm. The protein localises to the cytoskeleton. The catalysed reaction is GTP + H2O = GDP + phosphate + H(+). In terms of biological role, tubulin is the major constituent of microtubules, a cylinder consisting of laterally associated linear protofilaments composed of alpha- and beta-tubulin heterodimers. Microtubules grow by the addition of GTP-tubulin dimers to the microtubule end, where a stabilizing cap forms. Below the cap, tubulin dimers are in GDP-bound state, owing to GTPase activity of alpha-tubulin. This chain is Tubulin alpha chain, found in Euplotes vannus (Marine ciliate).